Here is a 166-residue protein sequence, read N- to C-terminus: Putative protein PTGES3L (166 aa).

The CS domain occupies 46 to 154; the sequence is RQHARTLWYD…RPPPAMDDLD (109 aa). The interval 142-166 is disordered; the sequence is STKRPPPAMDDLDDDSDSADDATSN. Positions 151 to 166 are enriched in acidic residues; that stretch reads DDLDDDSDSADDATSN.

This sequence belongs to the p23/wos2 family.

The protein is Putative protein PTGES3L of Homo sapiens (Human).